The primary structure comprises 192 residues: Cell division protein SepF (192 aa).

The tract at residues 15–70 (GDPLEYEEDGEEYEQVYREENKREEARRATAGTAAAATPTAAAQASDAAPMGSGPA) is disordered. The segment covering 18 to 28 (LEYEEDGEEYE) has biased composition (acidic residues). Positions 29–42 (QVYREENKREEARR) are enriched in basic and acidic residues. The span at 43–63 (ATAGTAAAATPTAAAQASDAA) shows a compositional bias: low complexity.

Belongs to the SepF family. In terms of assembly, homodimer. Interacts with FtsZ.

The protein resides in the cytoplasm. Cell division protein that is part of the divisome complex and is recruited early to the Z-ring. Probably stimulates Z-ring formation, perhaps through the cross-linking of FtsZ protofilaments. Its function overlaps with FtsA. The sequence is that of Cell division protein SepF from Gloeobacter violaceus (strain ATCC 29082 / PCC 7421).